Here is a 516-residue protein sequence, read N- to C-terminus: GMP synthase [glutamine-hydrolyzing] (516 aa).

In terms of domain architecture, Glutamine amidotransferase type-1 spans 8–198 (KILILDFGSQ…VVNICGCDTL (191 aa)). Cys-84 (nucleophile) is an active-site residue. Residues His-172 and Glu-174 contribute to the active site. A GMPS ATP-PPase domain is found at 199-391 (WNIENIIEND…LGLPYNMLYR (193 aa)). 226–232 (SGGVDSS) lines the ATP pocket.

Homodimer.

It carries out the reaction XMP + L-glutamine + ATP + H2O = GMP + L-glutamate + AMP + diphosphate + 2 H(+). Its pathway is purine metabolism; GMP biosynthesis; GMP from XMP (L-Gln route): step 1/1. Catalyzes the synthesis of GMP from XMP. The protein is GMP synthase [glutamine-hydrolyzing] of Francisella tularensis subsp. holarctica (strain FTNF002-00 / FTA).